A 427-amino-acid chain; its full sequence is Gamma-glutamyl phosphate reductase (427 aa).

This sequence belongs to the gamma-glutamyl phosphate reductase family.

The protein resides in the cytoplasm. It carries out the reaction L-glutamate 5-semialdehyde + phosphate + NADP(+) = L-glutamyl 5-phosphate + NADPH + H(+). It functions in the pathway amino-acid biosynthesis; L-proline biosynthesis; L-glutamate 5-semialdehyde from L-glutamate: step 2/2. Its function is as follows. Catalyzes the NADPH-dependent reduction of L-glutamate 5-phosphate into L-glutamate 5-semialdehyde and phosphate. The product spontaneously undergoes cyclization to form 1-pyrroline-5-carboxylate. In Brucella canis (strain ATCC 23365 / NCTC 10854 / RM-666), this protein is Gamma-glutamyl phosphate reductase.